Consider the following 334-residue polypeptide: Fe-S cluster assembly protein DRE2 (334 aa).

The N-terminal SAM-like domain stretch occupies residues 1-131 (MASTKTGLVL…ASIKAEPVAV (131 aa)). The tract at residues 132-228 (PLRNHKKTTT…EDELVDENEM (97 aa)) is linker. Residues 135–229 (NHKKTTTPGT…DELVDENEMR (95 aa)) are disordered. Over residues 140-150 (TTPGTTTTAKK) the composition is skewed to low complexity. Acidic residues-rich tracts occupy residues 182–192 (DSEDEDEESEG) and 215–227 (DSIEEDELVDENE). Positions 238, 249, 252, and 254 each coordinate [2Fe-2S] cluster. A fe-S binding site A region spans residues 238–254 (CGKSKTRRRKACKDCTC). Residues Cys-297, Cys-300, Cys-308, and Cys-311 each contribute to the [4Fe-4S] cluster site. 2 consecutive short sequence motifs (cx2C motif) follow at residues 297-300 (CGSC) and 308-311 (CSGC). The interval 297–311 (CGSCTLGDAFRCSGC) is fe-S binding site B.

This sequence belongs to the anamorsin family. Monomer. Interacts with TAH18. Interacts with MIA40. Requires [2Fe-2S] cluster as cofactor. The cofactor is [4Fe-4S] cluster.

It is found in the cytoplasm. The protein localises to the mitochondrion intermembrane space. Component of the cytosolic iron-sulfur (Fe-S) protein assembly (CIA) machinery required for the maturation of extramitochondrial Fe-S proteins. Part of an electron transfer chain functioning in an early step of cytosolic Fe-S biogenesis, facilitating the de novo assembly of a [4Fe-4S] cluster on the scaffold complex CFD1-NBP35. Electrons are transferred to DRE2 from NADPH via the FAD- and FMN-containing protein TAH18. TAH18-DRE2 are also required for the assembly of the diferric tyrosyl radical cofactor of ribonucleotide reductase (RNR), probably by providing electrons for reduction during radical cofactor maturation in the catalytic small subunit RNR2. The chain is Fe-S cluster assembly protein DRE2 from Zygosaccharomyces rouxii (strain ATCC 2623 / CBS 732 / NBRC 1130 / NCYC 568 / NRRL Y-229).